Here is a 555-residue protein sequence, read N- to C-terminus: Formate--tetrahydrofolate ligase (555 aa).

ATP is bound at residue 65-72 (TPAGEGKT).

It belongs to the formate--tetrahydrofolate ligase family.

It carries out the reaction (6S)-5,6,7,8-tetrahydrofolate + formate + ATP = (6R)-10-formyltetrahydrofolate + ADP + phosphate. It functions in the pathway one-carbon metabolism; tetrahydrofolate interconversion. In Caldanaerobacter subterraneus subsp. tengcongensis (strain DSM 15242 / JCM 11007 / NBRC 100824 / MB4) (Thermoanaerobacter tengcongensis), this protein is Formate--tetrahydrofolate ligase.